Consider the following 647-residue polypeptide: DNA polymerase subunit gamma-1 (647 aa).

The segment at 116-147 (ERPGRAEQSQMQDEDGLPELVEESSQPSFHHG) is disordered. The segment covering 127-137 (QDEDGLPELVE) has biased composition (acidic residues).

It belongs to the DNA polymerase type-A family. As to quaternary structure, heterotrimer composed of a catalytic subunit and a homodimer of accessory subunits. Interacts with TTC3. The cofactor is Mg(2+).

It localises to the mitochondrion. The protein resides in the mitochondrion matrix. It is found in the mitochondrion nucleoid. The enzyme catalyses DNA(n) + a 2'-deoxyribonucleoside 5'-triphosphate = DNA(n+1) + diphosphate. In terms of biological role, involved in the replication of mitochondrial DNA. Associates with mitochondrial DNA. This Gallus gallus (Chicken) protein is DNA polymerase subunit gamma-1 (POLG).